The chain runs to 328 residues: Malate dehydrogenase (328 aa).

Residue 11–17 (GAAGQIG) coordinates NAD(+). Residues Arg-94 and Arg-100 each coordinate substrate. NAD(+) is bound by residues Asn-107, Gln-114, and 131–133 (VGN). Substrate is bound by residues Asn-133 and Arg-164. His-189 acts as the Proton acceptor in catalysis.

The protein belongs to the LDH/MDH superfamily. MDH type 2 family.

The catalysed reaction is (S)-malate + NAD(+) = oxaloacetate + NADH + H(+). Catalyzes the reversible oxidation of malate to oxaloacetate. This chain is Malate dehydrogenase, found in Xanthomonas oryzae pv. oryzae (strain MAFF 311018).